A 447-amino-acid polypeptide reads, in one-letter code: UDP-N-acetylmuramoylalanine--D-glutamate ligase (447 aa).

112 to 118 (GTNGKST) provides a ligand contact to ATP.

This sequence belongs to the MurCDEF family.

The protein localises to the cytoplasm. The enzyme catalyses UDP-N-acetyl-alpha-D-muramoyl-L-alanine + D-glutamate + ATP = UDP-N-acetyl-alpha-D-muramoyl-L-alanyl-D-glutamate + ADP + phosphate + H(+). Its pathway is cell wall biogenesis; peptidoglycan biosynthesis. Functionally, cell wall formation. Catalyzes the addition of glutamate to the nucleotide precursor UDP-N-acetylmuramoyl-L-alanine (UMA). In Legionella pneumophila (strain Paris), this protein is UDP-N-acetylmuramoylalanine--D-glutamate ligase.